The chain runs to 590 residues: Probable serine/threonine-protein phosphatase PP2A regulatory subunit (590 aa).

HEAT repeat units lie at residues 37-73 (LSTI…VLAE), 74-111 (QLGN…DKAV), 113-150 (SLRK…TSAC), 151-188 (GLFS…RAAA), 189-227 (AKLG…LLTV), 228-266 (ESAI…YMVA), 267-305 (EKLI…CAAT), 306-344 (QRLQ…QLVK), 349-387 (GVIM…LNII), 388-426 (SSLD…LAIV), 427-465 (QFMP…EAST), 466-504 (LIMK…MTCL), 505-543 (FCLN…FNAA), and 544-582 (KSLK…YFSE).

It belongs to the phosphatase 2A regulatory subunit A family. Part of a complex consisting of a common heterodimeric core enzyme, composed of catalytic subunit let-92 and constant regulatory subunit paa-1, that associates with a variety of regulatory subunits which confer distinct properties to the holoenzyme. Interacts with rsa-1.

It is found in the cytoplasm. It localises to the cytoskeleton. The protein localises to the microtubule organizing center. Its subcellular location is the centrosome. The protein resides in the spindle. Its function is as follows. Acts as a scaffolding protein for phosphatase let-92 and its regulatory subunits. Probably together with let-92 and regulatory subunit sur-6, regulates centriole duplication, microtubule outgrowth and mitotic spindle stability during early embryonic cell division by preventing the degradation of sas-5 and kinase zyg-1. During vulva development, may play a role with phosphatase let-92 and regulatory subunit sur-6 in the induction of vulva cell precursors by positively regulating let-60/Ras-MAP kinase signaling, probably by promoting lin-45 activation. Plays a positive role in axon guidance probably by inhibiting phosphatase let-92. The polypeptide is Probable serine/threonine-protein phosphatase PP2A regulatory subunit (paa-1) (Caenorhabditis elegans).